The sequence spans 319 residues: D-alanine--D-alanine ligase B (319 aa).

Residues 117 to 312 (KQVWQSLGPA…FQQLVLAILA (196 aa)) form the ATP-grasp domain. 143 to 198 (ATELGFPLIVKPAHEGSSIGMAKVNSVDELIAAWKAASTYDSQVLVEQWIQGPEFT) lines the ATP pocket. Residues aspartate 266, glutamate 279, and asparagine 281 each contribute to the Mg(2+) site.

Belongs to the D-alanine--D-alanine ligase family. The cofactor is Mg(2+). Requires Mn(2+) as cofactor.

Its subcellular location is the cytoplasm. It catalyses the reaction 2 D-alanine + ATP = D-alanyl-D-alanine + ADP + phosphate + H(+). The protein operates within cell wall biogenesis; peptidoglycan biosynthesis. Functionally, cell wall formation. The chain is D-alanine--D-alanine ligase B from Pseudomonas syringae pv. tomato (strain ATCC BAA-871 / DC3000).